The sequence spans 149 residues: Large ribosomal subunit protein bL9 (149 aa).

It belongs to the bacterial ribosomal protein bL9 family.

Functionally, binds to the 23S rRNA. This Bacillus licheniformis (strain ATCC 14580 / DSM 13 / JCM 2505 / CCUG 7422 / NBRC 12200 / NCIMB 9375 / NCTC 10341 / NRRL NRS-1264 / Gibson 46) protein is Large ribosomal subunit protein bL9.